The sequence spans 527 residues: Ribonuclease Y 2 (527 aa).

Residues 2 to 22 (IAMIATAIIGIVAGGGLGWAL) traverse the membrane as a helical segment. An HD domain is found at 339–432 (QYFHCGEVGW…VIAADAVSGA (94 aa)).

This sequence belongs to the RNase Y family.

Its subcellular location is the cell membrane. Endoribonuclease that initiates mRNA decay. This is Ribonuclease Y 2 from Bdellovibrio bacteriovorus (strain ATCC 15356 / DSM 50701 / NCIMB 9529 / HD100).